Here is a 213-residue protein sequence, read N- to C-terminus: 3-isopropylmalate dehydratase small subunit (213 aa).

It belongs to the LeuD family. LeuD type 1 subfamily. As to quaternary structure, heterodimer of LeuC and LeuD.

The enzyme catalyses (2R,3S)-3-isopropylmalate = (2S)-2-isopropylmalate. It functions in the pathway amino-acid biosynthesis; L-leucine biosynthesis; L-leucine from 3-methyl-2-oxobutanoate: step 2/4. Catalyzes the isomerization between 2-isopropylmalate and 3-isopropylmalate, via the formation of 2-isopropylmaleate. The chain is 3-isopropylmalate dehydratase small subunit from Pseudomonas syringae pv. tomato (strain ATCC BAA-871 / DC3000).